We begin with the raw amino-acid sequence, 647 residues long: Acetyl-coenzyme A synthetase (647 aa).

CoA-binding positions include 190 to 193 (RGGK), threonine 310, and asparagine 334. ATP is bound by residues 386 to 388 (GEP), 410 to 415 (DTWWQT), aspartate 499, and arginine 514. Serine 522 contacts CoA. Arginine 525 lines the ATP pocket. Mg(2+) contacts are provided by valine 536, histidine 538, and valine 541. Arginine 583 serves as a coordination point for CoA. The residue at position 608 (lysine 608) is an N6-acetyllysine.

It belongs to the ATP-dependent AMP-binding enzyme family. Requires Mg(2+) as cofactor. Acetylated. Deacetylation by the SIR2-homolog deacetylase activates the enzyme.

The catalysed reaction is acetate + ATP + CoA = acetyl-CoA + AMP + diphosphate. Its function is as follows. Catalyzes the conversion of acetate into acetyl-CoA (AcCoA), an essential intermediate at the junction of anabolic and catabolic pathways. AcsA undergoes a two-step reaction. In the first half reaction, AcsA combines acetate with ATP to form acetyl-adenylate (AcAMP) intermediate. In the second half reaction, it can then transfer the acetyl group from AcAMP to the sulfhydryl group of CoA, forming the product AcCoA. The sequence is that of Acetyl-coenzyme A synthetase from Xanthomonas oryzae pv. oryzae (strain MAFF 311018).